The following is a 141-amino-acid chain: Protein MGF 100-2L (141 aa).

The protein belongs to the asfivirus MGF 100 family.

Functionally, plays a role in virus cell tropism, and may be required for efficient virus replication in macrophages. The polypeptide is Protein MGF 100-2L (African swine fever virus (isolate Pig/Kenya/KEN-50/1950) (ASFV)).